The chain runs to 552 residues: Urocanate hydratase (552 aa).

Residues 49–50 (GG), Q127, 173–175 (GMG), D193, 239–240 (NA), 260–264 (QTSAH), 270–271 (YI), and Y319 each bind NAD(+). The active site involves C407. G489 serves as a coordination point for NAD(+).

It belongs to the urocanase family. NAD(+) serves as cofactor.

It localises to the cytoplasm. It carries out the reaction 4-imidazolone-5-propanoate = trans-urocanate + H2O. Its pathway is amino-acid degradation; L-histidine degradation into L-glutamate; N-formimidoyl-L-glutamate from L-histidine: step 2/3. Catalyzes the conversion of urocanate to 4-imidazolone-5-propionate. The sequence is that of Urocanate hydratase from Bacillus cereus (strain AH820).